The chain runs to 453 residues: Trigger factor (453 aa).

In terms of domain architecture, PPIase FKBP-type spans 171–256 (GDRVTVSFKG…ATLVEAPKDT (86 aa)).

The protein belongs to the FKBP-type PPIase family. Tig subfamily.

It is found in the cytoplasm. The enzyme catalyses [protein]-peptidylproline (omega=180) = [protein]-peptidylproline (omega=0). In terms of biological role, involved in protein export. Acts as a chaperone by maintaining the newly synthesized protein in an open conformation. Functions as a peptidyl-prolyl cis-trans isomerase. The chain is Trigger factor from Rhodopseudomonas palustris (strain BisA53).